Reading from the N-terminus, the 188-residue chain is Large ribosomal subunit protein eL18 (188 aa).

The segment at 153–188 (GKAPGTPHSHTKPYIRSKGRKFERARGRRASRGYKN) is disordered. 2 stretches are compositionally biased toward basic residues: residues 161 to 171 (SHTKPYIRSKG) and 178 to 188 (RGRRASRGYKN).

This sequence belongs to the eukaryotic ribosomal protein eL18 family. In terms of assembly, component of the large ribosomal subunit.

The protein resides in the cytoplasm. It localises to the cytosol. It is found in the rough endoplasmic reticulum. Its function is as follows. Component of the large ribosomal subunit. The ribosome is a large ribonucleoprotein complex responsible for the synthesis of proteins in the cell. In Ictalurus punctatus (Channel catfish), this protein is Large ribosomal subunit protein eL18 (rpl18).